The sequence spans 295 residues: Ethanolamine ammonia-lyase small subunit (295 aa).

Residues Val207, Glu228, and Cys258 each coordinate adenosylcob(III)alamin.

It belongs to the EutC family. As to quaternary structure, the basic unit is a heterodimer which dimerizes to form tetramers. The heterotetramers trimerize; 6 large subunits form a core ring with 6 small subunits projecting outwards. Requires adenosylcob(III)alamin as cofactor.

It localises to the bacterial microcompartment. The enzyme catalyses ethanolamine = acetaldehyde + NH4(+). It functions in the pathway amine and polyamine degradation; ethanolamine degradation. Catalyzes the deamination of various vicinal amino-alcohols to oxo compounds. Allows this organism to utilize ethanolamine as the sole source of nitrogen and carbon in the presence of external vitamin B12. The protein is Ethanolamine ammonia-lyase small subunit of Shigella sonnei (strain Ss046).